A 237-amino-acid chain; its full sequence is Ribitol-5-phosphate cytidylyltransferase (237 aa).

Residues Leu7–Gly10 and Gly80–Thr86 each bind CTP.

The protein belongs to the IspD/TarI cytidylyltransferase family. TarI subfamily.

The catalysed reaction is D-ribitol 5-phosphate + CTP + H(+) = CDP-L-ribitol + diphosphate. It participates in cell wall biogenesis; poly(ribitol phosphate) teichoic acid biosynthesis. Functionally, catalyzes the transfer of the cytidylyl group of CTP to D-ribitol 5-phosphate. This Listeria innocua serovar 6a (strain ATCC BAA-680 / CLIP 11262) protein is Ribitol-5-phosphate cytidylyltransferase.